We begin with the raw amino-acid sequence, 146 residues long: Large ribosomal subunit protein uL15 (146 aa).

Residues Met-1 to Arg-13 are compositionally biased toward basic and acidic residues. Residues Met-1–Leu-55 are disordered. Over residues Ala-23–Gln-35 the composition is skewed to gly residues.

It belongs to the universal ribosomal protein uL15 family. As to quaternary structure, part of the 50S ribosomal subunit.

Its function is as follows. Binds to the 23S rRNA. The protein is Large ribosomal subunit protein uL15 of Staphylococcus carnosus (strain TM300).